The following is a 564-amino-acid chain: Probable cysteine--tRNA ligase, mitochondrial (564 aa).

Cys-78 is a Zn(2+) binding site. L-cysteine is bound at residue Gly-79. The 'HIGH' region motif lies at 80 to 90; the sequence is PTVYDHAHLGH. Thr-119 provides a ligand contact to L-cysteine. Residues 124–127 carry the 'KIIK' region motif; that stretch reads KIIK. Zn(2+)-binding residues include Cys-257, His-282, and Glu-286. An L-cysteine-binding site is contributed by His-282. The 'KMSKS' region motif lies at 317 to 321; the sequence is KMSKS. Residue Lys-320 participates in ATP binding.

This sequence belongs to the class-I aminoacyl-tRNA synthetase family. It depends on Zn(2+) as a cofactor.

It is found in the mitochondrion. It catalyses the reaction tRNA(Cys) + L-cysteine + ATP = L-cysteinyl-tRNA(Cys) + AMP + diphosphate. The catalysed reaction is 2 L-cysteine = S-sulfanyl-L-cysteine + L-alanine. The enzyme catalyses S-sulfanyl-L-cysteine + L-cysteine = S-disulfanyl-L-cysteine + L-alanine. It carries out the reaction S-sulfanyl-L-cysteine + tRNA(Cys) + ATP = (S)-sulfanyl-L-cysteinyl-tRNA(Cys) + AMP + diphosphate. It catalyses the reaction S-disulfanyl-L-cysteine + tRNA(Cys) + ATP = (S)-disulfanyl-L-cysteinyl-tRNA(Cys) + AMP + diphosphate. In terms of biological role, mitochondrial cysteine-specific aminoacyl-tRNA synthetase that catalyzes the ATP-dependent ligation of cysteine to tRNA(Cys). In addition to its role as an aminoacyl-tRNA synthetase, has also cysteine persulfide synthase activity. Produces reactive persulfide species such as cysteine persulfide (CysSSH) from substrate cysteine and mediate direct incorporation of CysSSH into proteins during translations, resulting in protein persulfides and polysulfides. CysSSHs behave as potent antioxidants and cellular protectants. This Homo sapiens (Human) protein is Probable cysteine--tRNA ligase, mitochondrial.